The chain runs to 722 residues: G2-specific protein kinase fin1 (722 aa).

In terms of domain architecture, Protein kinase spans 4-281 (YKILECIGHG…TYQLLRSPIL (278 aa)). Residues 10–18 (IGHGSFGRI) and Lys33 each bind ATP. The Proton acceptor role is filled by Asp151. The interval 528–557 (LSVESDETAVSASSGESVPTDSTLTDTKSK) is disordered. The span at 535-546 (TAVSASSGESVP) shows a compositional bias: polar residues.

Belongs to the protein kinase superfamily. Ser/Thr protein kinase family. NIMA subfamily.

Its subcellular location is the cytoplasm. It localises to the cytoskeleton. The protein localises to the microtubule organizing center. The protein resides in the spindle pole body. It catalyses the reaction L-seryl-[protein] + ATP = O-phospho-L-seryl-[protein] + ADP + H(+). It carries out the reaction L-threonyl-[protein] + ATP = O-phospho-L-threonyl-[protein] + ADP + H(+). In terms of biological role, promotes chromosome condensation and nuclear envelope dynamics during mitosis. Activity appears at metaphase-anaphase transition. The polypeptide is G2-specific protein kinase fin1 (fin1) (Schizosaccharomyces pombe (strain 972 / ATCC 24843) (Fission yeast)).